We begin with the raw amino-acid sequence, 483 residues long: Glutamyl-tRNA(Gln) amidotransferase subunit A (483 aa).

Active-site charge relay system residues include Lys75 and Ser150. The active-site Acyl-ester intermediate is Ser174.

This sequence belongs to the amidase family. GatA subfamily. Heterotrimer of A, B and C subunits.

It catalyses the reaction L-glutamyl-tRNA(Gln) + L-glutamine + ATP + H2O = L-glutaminyl-tRNA(Gln) + L-glutamate + ADP + phosphate + H(+). Allows the formation of correctly charged Gln-tRNA(Gln) through the transamidation of misacylated Glu-tRNA(Gln) in organisms which lack glutaminyl-tRNA synthetase. The reaction takes place in the presence of glutamine and ATP through an activated gamma-phospho-Glu-tRNA(Gln). The protein is Glutamyl-tRNA(Gln) amidotransferase subunit A of Microcystis aeruginosa (strain NIES-843 / IAM M-2473).